A 370-amino-acid chain; its full sequence is Queuine tRNA-ribosyltransferase (370 aa).

Residue Asp-89 is the Proton acceptor of the active site. Substrate-binding positions include 89–93 (DSGGF), Asp-143, Gln-187, and Gly-214. The RNA binding stretch occupies residues 245 to 251 (GVGKPEN). Asp-264 serves as the catalytic Nucleophile. The RNA binding; important for wobble base 34 recognition stretch occupies residues 269-273 (TRNAR). Residues Cys-302, Cys-304, Cys-307, and His-333 each contribute to the Zn(2+) site.

This sequence belongs to the queuine tRNA-ribosyltransferase family. Homodimer. Within each dimer, one monomer is responsible for RNA recognition and catalysis, while the other monomer binds to the replacement base PreQ1. It depends on Zn(2+) as a cofactor.

It catalyses the reaction 7-aminomethyl-7-carbaguanine + guanosine(34) in tRNA = 7-aminomethyl-7-carbaguanosine(34) in tRNA + guanine. The protein operates within tRNA modification; tRNA-queuosine biosynthesis. In terms of biological role, catalyzes the base-exchange of a guanine (G) residue with the queuine precursor 7-aminomethyl-7-deazaguanine (PreQ1) at position 34 (anticodon wobble position) in tRNAs with GU(N) anticodons (tRNA-Asp, -Asn, -His and -Tyr). Catalysis occurs through a double-displacement mechanism. The nucleophile active site attacks the C1' of nucleotide 34 to detach the guanine base from the RNA, forming a covalent enzyme-RNA intermediate. The proton acceptor active site deprotonates the incoming PreQ1, allowing a nucleophilic attack on the C1' of the ribose to form the product. After dissociation, two additional enzymatic reactions on the tRNA convert PreQ1 to queuine (Q), resulting in the hypermodified nucleoside queuosine (7-(((4,5-cis-dihydroxy-2-cyclopenten-1-yl)amino)methyl)-7-deazaguanosine). This Hamiltonella defensa subsp. Acyrthosiphon pisum (strain 5AT) protein is Queuine tRNA-ribosyltransferase.